Here is a 317-residue protein sequence, read N- to C-terminus: Lipopolysaccharide heptosyltransferase 1 (317 aa).

ADP-L-glycero-beta-D-manno-heptose is bound by residues Thr-187, Thr-188, Lys-192, Glu-222, Met-242, Asp-261, Thr-262, Gly-263, and His-266.

This sequence belongs to the glycosyltransferase 9 family.

Its subcellular location is the cell inner membrane. It carries out the reaction an alpha-Kdo-(2-&gt;4)-alpha-Kdo-(2-&gt;6)-lipid A + ADP-L-glycero-beta-D-manno-heptose = an L-alpha-D-Hep-(1-&gt;5)-[alpha-Kdo-(2-&gt;4)]-alpha-Kdo-(2-&gt;6)-lipid A + ADP + H(+). Its pathway is bacterial outer membrane biogenesis; LPS core biosynthesis. Functionally, glycosyltransferase involved in the biosynthesis of the core oligosaccharide region of lipopolysaccharide (LPS). Catalyzes the addition of the first heptose unit to one 3-deoxy-D-manno-octulosonic acid (Kdo) residue of the Kdo2-lipid A module. The chain is Lipopolysaccharide heptosyltransferase 1 from Salmonella typhimurium (strain LT2 / SGSC1412 / ATCC 700720).